A 90-amino-acid polypeptide reads, in one-letter code: Probable Fe(2+)-trafficking protein (90 aa).

This sequence belongs to the Fe(2+)-trafficking protein family.

In terms of biological role, could be a mediator in iron transactions between iron acquisition and iron-requiring processes, such as synthesis and/or repair of Fe-S clusters in biosynthetic enzymes. The sequence is that of Probable Fe(2+)-trafficking protein from Bordetella bronchiseptica (strain ATCC BAA-588 / NCTC 13252 / RB50) (Alcaligenes bronchisepticus).